A 356-amino-acid chain; its full sequence is MSKLKDNPDNSLNDRLNREKAIELARVQIEKDFGKGSLIKMGESPVGKGIESISSGSILLDEAIGVGGYPRGRIIEIFGPESSGKTTLTLQAIAEVQKNGGIAAFIDAEHALDPAYAKALGVNIDELWISQPDTGEQALEIAEYLIRSGGVDLIVVDSVAALTPQAEIDGEMGDSQIGLQARLMSKALRKITGILSKSNTCIMFINQLRMKIGVMFGNPETTTGGNALKFYSSLRLEVRKIDQVTGSSADDIVGNKIRIKVVKNKVAPPFRKVELVIYFGKGISREASILDASVKYNLIQKTGSWYSMGDDKLGQGREHAVSYLVKEKEVTDELESKLRKIIFEDPNQDFLEVGTT.

79-86 (GPESSGKT) lines the ATP pocket.

The protein belongs to the RecA family.

The protein resides in the cytoplasm. Its function is as follows. Can catalyze the hydrolysis of ATP in the presence of single-stranded DNA, the ATP-dependent uptake of single-stranded DNA by duplex DNA, and the ATP-dependent hybridization of homologous single-stranded DNAs. It interacts with LexA causing its activation and leading to its autocatalytic cleavage. This chain is Protein RecA, found in Borrelia hermsii (strain HS1 / DAH).